The sequence spans 298 residues: UDP-3-O-acyl-N-acetylglucosamine deacetylase (298 aa).

Residues His79, His239, and Asp243 each contribute to the Zn(2+) site. His266 functions as the Proton donor in the catalytic mechanism.

This sequence belongs to the LpxC family. Zn(2+) serves as cofactor.

The enzyme catalyses a UDP-3-O-[(3R)-3-hydroxyacyl]-N-acetyl-alpha-D-glucosamine + H2O = a UDP-3-O-[(3R)-3-hydroxyacyl]-alpha-D-glucosamine + acetate. Its pathway is glycolipid biosynthesis; lipid IV(A) biosynthesis; lipid IV(A) from (3R)-3-hydroxytetradecanoyl-[acyl-carrier-protein] and UDP-N-acetyl-alpha-D-glucosamine: step 2/6. In terms of biological role, catalyzes the hydrolysis of UDP-3-O-myristoyl-N-acetylglucosamine to form UDP-3-O-myristoylglucosamine and acetate, the committed step in lipid A biosynthesis. The polypeptide is UDP-3-O-acyl-N-acetylglucosamine deacetylase (Wigglesworthia glossinidia brevipalpis).